The primary structure comprises 92 residues: Small ribosomal subunit protein uS19c (92 aa).

Belongs to the universal ribosomal protein uS19 family.

It is found in the plastid. Its subcellular location is the chloroplast. Its function is as follows. Protein S19 forms a complex with S13 that binds strongly to the 16S ribosomal RNA. This chain is Small ribosomal subunit protein uS19c (rps19), found in Guillardia theta (Cryptophyte).